The following is a 311-amino-acid chain: NEDD4 family-interacting protein 2 (311 aa).

The segment at 1-133 is disordered; the sequence is RRSASDAELS…PPYSSITVEA (133 aa). Residues 1–206 are Cytoplasmic-facing; it reads RRSASDAELS…VEQLRVGNDG (206 aa). The span at 7–22 shows a compositional bias: low complexity; that stretch reads AELSAGAEGATGSEAA. Over residues 26-37 the composition is skewed to gly residues; that stretch reads DLGGRTRGGGRG. Residues 38–47 are compositionally biased toward low complexity; it reads SAAAAATTST. Residues 48–75 show a composition bias toward basic and acidic residues; that stretch reads REAEGAERRGDTPARKPDPEAGRMDHHQ. Polar residues predominate over residues 92–101; it reads ESSAVEQPST. Positions 102 to 120 are enriched in low complexity; sequence SSLAAPTVEAAASAPALDP. Residues 123–126 form an interaction with NEDD4 region; sequence PPPY. Residues 123–126 carry the PPxY motif 1 motif; it reads PPPY. Phosphotyrosine; by SRC occurs at positions 126, 142, 146, and 152. 2 short sequence motifs (PPxY motif) span residues 149-152 and 159-161; these read PPPY and PTY. A helical transmembrane segment spans residues 207-227; sequence IFMLAFFMAFIFNWLGFCLSF. Residues 228–232 lie on the Extracellular side of the membrane; sequence CITNT. Residues 233-253 form a helical membrane-spanning segment; it reads IAGRYGAICGFGLSLIKWILI. Topologically, residues 254-262 are cytoplasmic; that stretch reads VRFSDYFTG. Residues 263-283 traverse the membrane as a helical segment; sequence YFNGQYWLWWIFLVLGLLLFF. Residues 284 to 311 are Extracellular-facing; the sequence is RGFVNYLKVRNMSESMAAAHRTRYFFLL.

As to quaternary structure, forms heterodimers with NDFIP1. Interacts with HECT domain-containing E3 ubiquitin-protein ligases, including NEDD4. Interacts with NEDD4L. When phosphorylated at Tyr-142, interacts with SRC and LYN SH2 domain. May thus act as a scaffold that recruits SRC to NDFIP1, enhancing NDFIP1 phosphorylation. Interacts with SLC11A2/DMT1. May interact with phosphorylated EGFR. Interacts with KCNH2. In terms of processing, ubiquitinated by NEDD4 and NEDD4L; which does not affect turnover. Also ubiquitinated by ITCH. Undergoes transient tyrosine-phosphorylation following EGF stimulation, most probably catalyzed by SRC. Phosphorylation on Tyr-126, Tyr-146 and Tyr-152 are dependent on the phosphorylation on Tyr-142. Also phosphorylated by LYN and FYN. In terms of tissue distribution, ubiquitously expressed, with highest levels in brain, liver, kidney and testis.

The protein localises to the endosome membrane. Its subcellular location is the golgi apparatus membrane. The protein resides in the endosome. It is found in the multivesicular body membrane. Its function is as follows. Activates HECT domain-containing E3 ubiquitin-protein ligases, including ITCH, NEDD4, NEDD4L, SMURF2, WWP1 and WWP2, and consequently modulates the stability of their targets. As a result, may control many cellular processes. Recruits ITCH, NEDD4 and SMURF2 to endosomal membranes. Negatively regulates KCNH2 potassium channel activity by decreasing its cell-surface expression and interfering with channel maturation through recruitment of NEDD4L to the Golgi apparatus and multivesicular body where it mediates KCNH2 degradation. May modulate EGFR signaling. Together with NDFIP1, limits the cytokine signaling and expansion of effector Th2 T-cells by promoting degradation of JAK1, probably by ITCH- and NEDD4L-mediated ubiquitination. The protein is NEDD4 family-interacting protein 2 (Ndfip2) of Mus musculus (Mouse).